The following is a 1355-amino-acid chain: NACHT, LRR and PYD domains-containing protein 1 homolog (1355 aa).

The NACHT domain maps to 257-458 (KTVILCGDSG…SVPLLCWMVC (202 aa)). 263–270 (GDSGRGKS) provides a ligand contact to ATP. The segment at 977 to 1109 (DSDQWVQVEP…FHAKILQPMF (133 aa)) is ZU5. Positions 977-1252 (DSDQWVQVEP…NKTESDLFQS (276 aa)) constitute an FIIND domain. Residues 1110–1252 (SPKTVLVKLG…NKTESDLFQS (143 aa)) are UPA. The CARD domain occupies 1278-1354 (LIKSVENVDT…NLLNHLPSSD (77 aa)).

It belongs to the NLRP family. In terms of assembly, interacts with the C-terminal part of nlrp1 (NACHT, LRR and PYD domains-containing protein 1, C-terminus) in absence of pathogens and other damage-associated signals. Interacts with the N-terminal part of nlrp1 (NACHT, LRR and PYD domains-containing protein 1, N-terminus) in absence of pathogens and other damage-associated signals. Homomultimer; forms the nlrp1 inflammasome polymeric complex, a filament composed of homopolymers of this form in response to pathogens and other damage-associated signals. The nlrp1 inflammasome polymeric complex associates with pycard/asc. Interacts (via CARD domain) with pycard/asc (via CARD domain); leading to pro-inflammatory caspases (caspa and/or caspb) recruitment. Pro-caspase-a and pro-caspase-b filament formation increases local enzyme concentration, resulting in trans-autocleavage and activation. Active caspa and caspb then processes il1b and il18 precursors, leading to the release of mature cytokines in the extracellular milieu and inflammatory response. Autocatalytically cleaved. Autocatalytic cleavage in FIIND region occurs constitutively, prior to activation signals, and is required for inflammasome activity (IL1B release), possibly by facilitating pro-inflammatory caspases (caspa and/or caspb) binding. Both N- and C-terminal parts remain associated non-covalently. Post-translationally, ubiquitinated in response to pathogen-associated signals, leading to its degradation by the proteasome and subsequent release of the cleaved C-terminal part of the protein (NACHT, LRR and PYD domains-containing protein 1, C-terminus), which polymerizes and forms the nlrp1 inflammasome. As to expression, expressed in adult spleen, head kidney, gill and skin and also in the embryo.

It localises to the cytoplasm. It is found in the inflammasome. Nlrp1 inflammasome is activated by pathogens and other damage-associated signals: activation promotes ubiquitination and degradation of the N-terminal part, releasing the cleaved C-terminal part of the protein (NACHT, LRR and PYD domains-containing protein 1, C-terminus), which polymerizes and forms the nlrp1 inflammasome. Its function is as follows. Acts as the sensor component of the nlrp1 inflammasome, which mediates inflammasome activation in response to various pathogen-associated signals, leading to subsequent pyroptosis. Inflammasomes are supramolecular complexes that assemble in the cytosol in response to pathogens and other damage-associated signals and play critical roles in innate immunity and inflammation. Acts as a recognition receptor (PRR): recognizes specific pathogens and other damage-associated signals, and mediates the formation of the inflammasome polymeric complex. In response to pathogen-associated signals, the N-terminal part of nlrp1 is degraded by the proteasome, releasing the cleaved C-terminal part of the protein (NACHT, LRR and PYD domains-containing protein 1, C-terminus), which polymerizes to initiate the formation of the inflammasome complex: the inflammasome recruits and activate pro-inflammatory caspases (caspa and/or caspb), leading to pyroptosis. In terms of biological role, constitutes the precursor of the nlrp1 inflammasome, which mediates autoproteolytic processing within the FIIND domain to generate the N-terminal and C-terminal parts, which are associated non-covalently in absence of pathogens and other damage-associated signals. Functionally, regulatory part that prevents formation of the nlrp1 inflammasome: in absence of pathogens and other damage-associated signals, interacts with the C-terminal part of nlrp1 (NACHT, LRR and PYD domains-containing protein 1, C-terminus), preventing activation of the nlrp1 inflammasome. In response to pathogen-associated signals, this part is ubiquitinated and degraded by the proteasome, releasing the cleaved C-terminal part of the protein, which polymerizes and forms the nlrp1 inflammasome. Constitutes the active part of the nlrp1 inflammasome. In absence of pathogens and other damage-associated signals, interacts with the N-terminal part of nlrp1 (NACHT, LRR and PYD domains-containing protein 1, N-terminus), preventing activation of the nlrp1 inflammasome. In response to pathogen-associated signals, the N-terminal part of nlrp1 is degraded by the proteasome, releasing this form, which polymerizes to form the nlrp1 inflammasome complex: the nlrp1 inflammasome complex then directly recruits and activates pro-inflammatory caspases (caspa and/or caspb) activation, leading to subsequent pyroptosis. The sequence is that of NACHT, LRR and PYD domains-containing protein 1 homolog from Danio rerio (Zebrafish).